A 234-amino-acid polypeptide reads, in one-letter code: UDP-2,3-diacylglucosamine hydrolase (234 aa).

Mn(2+) contacts are provided by Asp-9, His-11, Asp-42, Asn-80, and His-115. Substrate is bound at residue 80 to 81 (NR). Substrate contacts are provided by Asp-123, Ser-161, Lys-165, Lys-168, and His-196. Residues His-196 and His-198 each contribute to the Mn(2+) site.

Belongs to the LpxH family. The cofactor is Mn(2+).

The protein resides in the cell inner membrane. The catalysed reaction is UDP-2-N,3-O-bis[(3R)-3-hydroxytetradecanoyl]-alpha-D-glucosamine + H2O = 2-N,3-O-bis[(3R)-3-hydroxytetradecanoyl]-alpha-D-glucosaminyl 1-phosphate + UMP + 2 H(+). Its pathway is glycolipid biosynthesis; lipid IV(A) biosynthesis; lipid IV(A) from (3R)-3-hydroxytetradecanoyl-[acyl-carrier-protein] and UDP-N-acetyl-alpha-D-glucosamine: step 4/6. Its function is as follows. Hydrolyzes the pyrophosphate bond of UDP-2,3-diacylglucosamine to yield 2,3-diacylglucosamine 1-phosphate (lipid X) and UMP by catalyzing the attack of water at the alpha-P atom. Involved in the biosynthesis of lipid A, a phosphorylated glycolipid that anchors the lipopolysaccharide to the outer membrane of the cell. The sequence is that of UDP-2,3-diacylglucosamine hydrolase from Histophilus somni (strain 2336) (Haemophilus somnus).